We begin with the raw amino-acid sequence, 106 residues long: UPF0145 protein Nmul_A0734 (106 aa).

The protein belongs to the UPF0145 family.

This is UPF0145 protein Nmul_A0734 from Nitrosospira multiformis (strain ATCC 25196 / NCIMB 11849 / C 71).